The primary structure comprises 218 residues: Ribose-5-phosphate isomerase A (218 aa).

Residues 28-31, 81-84, and 94-97 each bind substrate; these read TGST, DGAD, and KGGG. The active-site Proton acceptor is the E103. K121 serves as a coordination point for substrate.

This sequence belongs to the ribose 5-phosphate isomerase family. As to quaternary structure, homodimer.

The catalysed reaction is aldehydo-D-ribose 5-phosphate = D-ribulose 5-phosphate. It functions in the pathway carbohydrate degradation; pentose phosphate pathway; D-ribose 5-phosphate from D-ribulose 5-phosphate (non-oxidative stage): step 1/1. Catalyzes the reversible conversion of ribose-5-phosphate to ribulose 5-phosphate. In Methylococcus capsulatus (strain ATCC 33009 / NCIMB 11132 / Bath), this protein is Ribose-5-phosphate isomerase A.